Reading from the N-terminus, the 295-residue chain is Fatty acid desaturase 4-like 1, chloroplastic (295 aa).

Residues 1-29 constitute a chloroplast transit peptide; sequence MAVSFQTKNPLRPITNIPRSYGPTRVRVT. Helical transmembrane passes span 72–92, 102–122, and 175–195; these read WVAAGSTTIFASFAKSIIGGF, LACYAGYVFADLGSGVYHWAI, and LAINNPLFHSFVSTFAFCILL.

This sequence belongs to the fatty acid desaturase CarF family.

It localises to the plastid. Its subcellular location is the chloroplast membrane. It functions in the pathway lipid metabolism; fatty acid metabolism. Its function is as follows. Fatty acid desaturase involved in the production of chloroplast-specific phosphatidylglycerol molecular species. Catalyzes the formation of a trans double bond introduced close to the carboxyl group of palmitic acid, which is specifically esterified to the sn-2 glyceryl carbon of phosphatidylglycerol. The polypeptide is Fatty acid desaturase 4-like 1, chloroplastic (FAD4L1) (Arabidopsis thaliana (Mouse-ear cress)).